The primary structure comprises 61 residues: Small ribosomal subunit protein uS14 (61 aa).

Zn(2+) is bound by residues cysteine 24, cysteine 27, cysteine 40, and cysteine 43.

Belongs to the universal ribosomal protein uS14 family. Zinc-binding uS14 subfamily. As to quaternary structure, part of the 30S ribosomal subunit. Contacts proteins S3 and S10. Zn(2+) is required as a cofactor.

Binds 16S rRNA, required for the assembly of 30S particles and may also be responsible for determining the conformation of the 16S rRNA at the A site. The polypeptide is Small ribosomal subunit protein uS14 (Geobacillus stearothermophilus (Bacillus stearothermophilus)).